The sequence spans 699 residues: MTTLDQISTLTQPRHPDDWTEIDSAAVDTIRVLATDAVQKAGNGHPGTAMSLAPLAYTLFQRTLRHDPNDTAWLGRDRFVLSAGHSSLTLYIQLYLGGFGLELSDIESLRTWGSTTPGHPEFRHTKGVEITTGPLGQGLASAVGMAMASRYERGLFDPDAEPGASPFDHYIYVIASDGDIEEGVTSEASSLAAVQQLGNLIVFYDHNQISIEGDTKITLCEDTAARYRAYGWHVQEVEGGENVVGIEEAIANAKAATDRPSFISLRTIIGYPAPTLINTGKAHGAALGEDEVAATKRILGFDPDKTFAVREDVITHTRGLIARGKEAHERWQLEFEAWAQREPERKALLDRLLAQQLPDGWDADLPNWEPRSKELATRAASGAVLSAIGPKLPELWGGSADLAGSNNTTIKDVDSFGPPSISTDEYTAHWYGRTLHFGVREHAMGAILSGIVLHGPTRAYGGTFLQFSDYMRPSVRLASLMDIDTIYVWTHDSVGLGEDGPTHQPIEHLAALRAIPRLSVVRPADANETAYAWRTILARGANSGPVGLILTRQSVPVLEGTNTEGVARGGYVLGDGGSSEAKEPDVILIATGSEVQLAVAAQKLLADKDIIVRVVSMPCVEWFESQPYEYRDSVLPPSVSARVAVEAGVAQCWHKLVGDTGKIVSIEHYGESADYQTLFREYGFTPEAVVAAAEQVLDN.

A substrate-binding site is contributed by His-45. Residues Thr-48, His-85, and 133–135 (GPL) each bind thiamine diphosphate. Asp-177 contributes to the Mg(2+) binding site. 2 residues coordinate thiamine diphosphate: Gly-178 and Asn-207. Positions 207 and 209 each coordinate Mg(2+). 3 residues coordinate substrate: His-283, Arg-378, and Ser-405. Thiamine diphosphate is bound at residue His-283. The active-site Proton donor is the Glu-441. Thiamine diphosphate is bound at residue Phe-467. Substrate contacts are provided by His-491, Asp-499, and Arg-552.

The protein belongs to the transketolase family. As to quaternary structure, homodimer. Mg(2+) is required as a cofactor. The cofactor is Ca(2+). It depends on Mn(2+) as a cofactor. Co(2+) serves as cofactor. Requires thiamine diphosphate as cofactor.

The enzyme catalyses D-sedoheptulose 7-phosphate + D-glyceraldehyde 3-phosphate = aldehydo-D-ribose 5-phosphate + D-xylulose 5-phosphate. Its function is as follows. Catalyzes the transfer of a two-carbon ketol group from a ketose donor to an aldose acceptor, via a covalent intermediate with the cofactor thiamine pyrophosphate. The protein is Transketolase (tkt) of Mycobacterium leprae (strain TN).